Consider the following 372-residue polypeptide: Anhydro-N-acetylmuramic acid kinase (372 aa).

12–19 (GTSMDALD) contacts ATP.

The protein belongs to the anhydro-N-acetylmuramic acid kinase family.

It carries out the reaction 1,6-anhydro-N-acetyl-beta-muramate + ATP + H2O = N-acetyl-D-muramate 6-phosphate + ADP + H(+). The protein operates within amino-sugar metabolism; 1,6-anhydro-N-acetylmuramate degradation. It functions in the pathway cell wall biogenesis; peptidoglycan recycling. In terms of biological role, catalyzes the specific phosphorylation of 1,6-anhydro-N-acetylmuramic acid (anhMurNAc) with the simultaneous cleavage of the 1,6-anhydro ring, generating MurNAc-6-P. Is required for the utilization of anhMurNAc either imported from the medium or derived from its own cell wall murein, and thus plays a role in cell wall recycling. In Coxiella burnetii (strain CbuK_Q154) (Coxiella burnetii (strain Q154)), this protein is Anhydro-N-acetylmuramic acid kinase.